The primary structure comprises 371 residues: Cytochrome b (371 aa).

Helical transmembrane passes span 32–52, 76–98, 113–133, and 179–199; these read VGFS…CLAW, FVIR…VHIF, VWAV…IGYV, and LHVL…MHLF. Positions 82 and 96 each coordinate heme b. Residues His-183 and His-197 each coordinate heme b. His-202 contributes to the a ubiquinone binding site. The next 4 helical transmembrane spans lie at 227–247, 296–316, 329–349, and 350–370; these read FYLR…YFIF, LMVI…LWFV, LILF…ILAY, and PIWM…VCRL.

Belongs to the cytochrome b family. The main subunits of complex b-c1 are: cytochrome b, cytochrome c1 and the Rieske protein. The cofactor is heme b.

It localises to the mitochondrion inner membrane. Functionally, component of the ubiquinol-cytochrome c reductase complex (complex III or cytochrome b-c1 complex) that is part of the mitochondrial respiratory chain. The b-c1 complex mediates electron transfer from ubiquinol to cytochrome c. Contributes to the generation of a proton gradient across the mitochondrial membrane that is then used for ATP synthesis. The sequence is that of Cytochrome b (MT-CYB) from Leishmania tarentolae (Sauroleishmania tarentolae).